We begin with the raw amino-acid sequence, 357 residues long: MYPLVRRLLFLIPPEHAHKLVFAVLRGVAAVAPVRRLLRRLLGPTDPVLASTVFGVRFPAPLGLAAGFDKDGTALSSWGAMGFGYAEIGTVTAHPQPGNPAPRLFRLADDRALLNRMGFNNHGARALAIRLARHRPEIPIGVNIGKTKKTPAGDAVNDYRASARMVGPLASYLVVNVSSPNTPGLRDLQAVESLRPILSAVRAETSTPVLVKIAPDLSDSDLDDIADLAVELDLAGIVATNTTVSRDGLTTPGVDRLGPGGISGPPLAQRAVQVLRRLYDRVGDRLALISVGGIETADDAWERITAGASLLQGYTGFIYGGERWAKDIHEGIARRLHDGGFGSLHEAVGSARRRQPS.

FMN is bound by residues 66–70 (AGFDK) and Thr90. Lys70 contributes to the substrate binding site. 115–119 (NRMGF) contributes to the substrate binding site. Residues Asn143 and Asn176 each coordinate FMN. Residue Asn176 coordinates substrate. Ser179 acts as the Nucleophile in catalysis. Substrate is bound at residue Asn181. FMN contacts are provided by Lys212 and Thr240. 241–242 (NT) is a binding site for substrate. FMN contacts are provided by residues Gly264, Gly293, and 314–315 (YT).

Belongs to the dihydroorotate dehydrogenase family. Type 2 subfamily. As to quaternary structure, monomer. FMN is required as a cofactor.

It is found in the cell membrane. The catalysed reaction is (S)-dihydroorotate + a quinone = orotate + a quinol. It functions in the pathway pyrimidine metabolism; UMP biosynthesis via de novo pathway; orotate from (S)-dihydroorotate (quinone route): step 1/1. Catalyzes the conversion of dihydroorotate to orotate with quinone as electron acceptor. The sequence is that of Dihydroorotate dehydrogenase (quinone) from Mycobacterium tuberculosis (strain ATCC 25177 / H37Ra).